The following is a 394-amino-acid chain: S-adenosylmethionine synthase (394 aa).

H15 is an ATP binding site. D17 lines the Mg(2+) pocket. Residue E43 participates in K(+) binding. L-methionine is bound by residues E56 and Q99. Positions 99–109 are flexible loop; it reads QSPDIALGVNK. Residues 173–175, 239–240, D248, 254–255, A271, and K275 each bind ATP; these read DGK, RF, and RK. Residue D248 coordinates L-methionine. K279 provides a ligand contact to L-methionine.

Belongs to the AdoMet synthase family. Homotetramer; dimer of dimers. Requires Mg(2+) as cofactor. It depends on K(+) as a cofactor.

Its subcellular location is the cytoplasm. The enzyme catalyses L-methionine + ATP + H2O = S-adenosyl-L-methionine + phosphate + diphosphate. It functions in the pathway amino-acid biosynthesis; S-adenosyl-L-methionine biosynthesis; S-adenosyl-L-methionine from L-methionine: step 1/1. Catalyzes the formation of S-adenosylmethionine (AdoMet) from methionine and ATP. The overall synthetic reaction is composed of two sequential steps, AdoMet formation and the subsequent tripolyphosphate hydrolysis which occurs prior to release of AdoMet from the enzyme. The protein is S-adenosylmethionine synthase of Kosmotoga olearia (strain ATCC BAA-1733 / DSM 21960 / TBF 19.5.1).